Reading from the N-terminus, the 360-residue chain is UDP-N-acetylglucosamine--N-acetylmuramyl-(pentapeptide) pyrophosphoryl-undecaprenol N-acetylglucosamine transferase (360 aa).

UDP-N-acetyl-alpha-D-glucosamine contacts are provided by residues 15–17 (TGG), N124, R165, S191, and Q285.

The protein belongs to the glycosyltransferase 28 family. MurG subfamily.

The protein localises to the cell inner membrane. It carries out the reaction di-trans,octa-cis-undecaprenyl diphospho-N-acetyl-alpha-D-muramoyl-L-alanyl-D-glutamyl-meso-2,6-diaminopimeloyl-D-alanyl-D-alanine + UDP-N-acetyl-alpha-D-glucosamine = di-trans,octa-cis-undecaprenyl diphospho-[N-acetyl-alpha-D-glucosaminyl-(1-&gt;4)]-N-acetyl-alpha-D-muramoyl-L-alanyl-D-glutamyl-meso-2,6-diaminopimeloyl-D-alanyl-D-alanine + UDP + H(+). The protein operates within cell wall biogenesis; peptidoglycan biosynthesis. Its function is as follows. Cell wall formation. Catalyzes the transfer of a GlcNAc subunit on undecaprenyl-pyrophosphoryl-MurNAc-pentapeptide (lipid intermediate I) to form undecaprenyl-pyrophosphoryl-MurNAc-(pentapeptide)GlcNAc (lipid intermediate II). This chain is UDP-N-acetylglucosamine--N-acetylmuramyl-(pentapeptide) pyrophosphoryl-undecaprenol N-acetylglucosamine transferase, found in Gloeothece citriformis (strain PCC 7424) (Cyanothece sp. (strain PCC 7424)).